The sequence spans 437 residues: Ribulose bisphosphate carboxylase/oxygenase activase, chloroplastic (437 aa).

Residues 1–10 (MATAVSTIGS) show a composition bias toward polar residues. Residues 1 to 26 (MATAVSTIGSVNRAPPNLNGSSSSAS) form a disordered region. Residue 165-172 (GGKGQGKS) coordinates ATP.

Belongs to the RuBisCO activase family.

The protein localises to the plastid. It localises to the chloroplast stroma. Functionally, activation of RuBisCO (ribulose-1,5-bisphosphate carboxylase/oxygenase; EC 4.1.1.39) involves the ATP-dependent carboxylation of the epsilon-amino group of lysine leading to a carbamate structure. The polypeptide is Ribulose bisphosphate carboxylase/oxygenase activase, chloroplastic (RCA) (Malus domestica (Apple)).